Here is a 187-residue protein sequence, read N- to C-terminus: Ribosome-recycling factor (187 aa).

Belongs to the RRF family.

Its subcellular location is the cytoplasm. Responsible for the release of ribosomes from messenger RNA at the termination of protein biosynthesis. May increase the efficiency of translation by recycling ribosomes from one round of translation to another. This Methylobacterium nodulans (strain LMG 21967 / CNCM I-2342 / ORS 2060) protein is Ribosome-recycling factor.